A 327-amino-acid polypeptide reads, in one-letter code: GTPase Obg (327 aa).

The region spanning 1 to 159 is the Obg domain; the sequence is MQFIDQANII…WEVQLELKLL (159 aa). Residues 160-327 enclose the OBG-type G domain; the sequence is AEVGIIGLPN…SLLSEVWKRI (168 aa). ATP contacts are provided by residues 166–173, 191–195, 213–216, 280–283, and 309–311; these read GLPNAGKS, FTTLI, DIPG, NKME, and SSS. Residues serine 173 and threonine 193 each contribute to the Mg(2+) site.

It belongs to the TRAFAC class OBG-HflX-like GTPase superfamily. OBG GTPase family. Monomer. Mg(2+) is required as a cofactor.

The protein localises to the cytoplasm. Functionally, an essential GTPase which binds GTP, GDP and possibly (p)ppGpp with moderate affinity, with high nucleotide exchange rates and a fairly low GTP hydrolysis rate. Plays a role in control of the cell cycle, stress response, ribosome biogenesis and in those bacteria that undergo differentiation, in morphogenesis control. This is GTPase Obg from Prochlorococcus marinus (strain MIT 9215).